We begin with the raw amino-acid sequence, 103 residues long: Leukocyte cysteine proteinase inhibitor 1 (103 aa).

Position 1 is a blocked amino end (Met); partial (Met-1). Residues 1–20 form a disordered region; it reads MESEEMLAGGLTEPRPATPE. The Secondary area of contact signature appears at 51-55; sequence QVVAG.

Belongs to the cystatin family.

It is found in the cytoplasm. Its function is as follows. Potent inhibitor of cathepsins L and S, and papain. The chain is Leukocyte cysteine proteinase inhibitor 1 from Sus scrofa (Pig).